Here is a 434-residue protein sequence, read N- to C-terminus: Adenylosuccinate synthetase (434 aa).

Residues 14–20 (GDEGKGK) and 42–44 (GHE) contribute to the GTP site. The active-site Proton acceptor is the Asp15. Positions 15 and 42 each coordinate Mg(2+). IMP contacts are provided by residues 15 to 18 (DEGK), 40 to 43 (NSGH), Thr133, Arg147, Asn229, Thr244, and Arg308. The active-site Proton donor is the His43. 304 to 310 (VTTGRVR) serves as a coordination point for substrate. GTP is bound by residues Arg310, 336–338 (KLD), and 422–424 (GTG).

The protein belongs to the adenylosuccinate synthetase family. As to quaternary structure, homodimer. Requires Mg(2+) as cofactor.

The protein resides in the cytoplasm. The catalysed reaction is IMP + L-aspartate + GTP = N(6)-(1,2-dicarboxyethyl)-AMP + GDP + phosphate + 2 H(+). Its pathway is purine metabolism; AMP biosynthesis via de novo pathway; AMP from IMP: step 1/2. Plays an important role in the salvage pathway for purine nucleotide biosynthesis. Catalyzes the first committed step in the biosynthesis of AMP from IMP. This Theileria parva (East coast fever infection agent) protein is Adenylosuccinate synthetase.